The chain runs to 612 residues: tRNA 5-methylaminomethyl-2-thiouridine biosynthesis bifunctional protein MnmC (612 aa).

The interval 1 to 218 (MITFRGDGLY…KREILEASLE (218 aa)) is tRNA (mnm(5)s(2)U34)-methyltransferase. The tract at residues 244–612 (IGAGVAGLAA…VRKLKRGLVR (369 aa)) is FAD-dependent cmnm(5)s(2)U34 oxidoreductase.

The protein in the N-terminal section; belongs to the methyltransferase superfamily. tRNA (mnm(5)s(2)U34)-methyltransferase family. In the C-terminal section; belongs to the DAO family. FAD serves as cofactor.

It localises to the cytoplasm. The catalysed reaction is 5-aminomethyl-2-thiouridine(34) in tRNA + S-adenosyl-L-methionine = 5-methylaminomethyl-2-thiouridine(34) in tRNA + S-adenosyl-L-homocysteine + H(+). Functionally, catalyzes the last two steps in the biosynthesis of 5-methylaminomethyl-2-thiouridine (mnm(5)s(2)U) at the wobble position (U34) in tRNA. Catalyzes the FAD-dependent demodification of cmnm(5)s(2)U34 to nm(5)s(2)U34, followed by the transfer of a methyl group from S-adenosyl-L-methionine to nm(5)s(2)U34, to form mnm(5)s(2)U34. This is tRNA 5-methylaminomethyl-2-thiouridine biosynthesis bifunctional protein MnmC from Campylobacter fetus subsp. fetus (strain 82-40).